A 612-amino-acid chain; its full sequence is MDLEKLKDYQKHIRNFAIVAHIDHGKSTIADRILELTDTVSQRQLKNQMLDDMPLERQRGITIKMNSVEVKYHARDGEDYIFHLIDTPGHVDFSYEVSRSLAACEGALMVVDASQGVQAQTLANTYVAIDDDLEILPVINKIDLPSADIPKTKEEIEEMLGLDASEAAEVSGKTGQGIEDMLEKVVKDIPAPSGDITAPLKALIFDSKYDDYRGVVMSVKIEDGVVKPGDRIKIMNTGKEYEVTEVGVSSPHPVKKDLLIAGDVGYITANIKSVRETRVGDTITDATNPTEEPLEGYRQIPPMVYSGMYPVDNRDYDDLKEALQKLQLNDAALEFEPETSTALGFGFRCGFLGLLHMDVVQERLEQEFDLGLIMTAPSVDYHAIMNDGSTKVIDNPSDLPDAGEYQEVQEPYVKAEIMVLNDFVGPVMELCQRKRGEFVTMDYLDKYRVNVIYNMPLAEIIFDFFDDLKSSTKGYASLDYEITGYRSTDLVKIDILLNKEPIDALSFIAHRSEAQDRARQMTSMLKKLIPRQNFEVDIQGAIGAKIISRATIKPYRKDVTWKIHTGDPDRRAKLLEKQKRGKKRMKAVGRVEVPQDAFMAVLKMHDDDIKGK.

The region spanning 11–193 is the tr-type G domain; the sequence is KHIRNFAIVA…KVVKDIPAPS (183 aa). GTP contacts are provided by residues 23 to 28 and 140 to 143; these read DHGKST and NKID.

It belongs to the TRAFAC class translation factor GTPase superfamily. Classic translation factor GTPase family. LepA subfamily.

It localises to the cell membrane. The enzyme catalyses GTP + H2O = GDP + phosphate + H(+). In terms of biological role, required for accurate and efficient protein synthesis under certain stress conditions. May act as a fidelity factor of the translation reaction, by catalyzing a one-codon backward translocation of tRNAs on improperly translocated ribosomes. Back-translocation proceeds from a post-translocation (POST) complex to a pre-translocation (PRE) complex, thus giving elongation factor G a second chance to translocate the tRNAs correctly. Binds to ribosomes in a GTP-dependent manner. This Lactobacillus helveticus (strain DPC 4571) protein is Elongation factor 4.